The chain runs to 855 residues: DNA mismatch repair protein MutS (855 aa).

Position 616–623 (616–623 (GPNMGGKS)) interacts with ATP.

Belongs to the DNA mismatch repair MutS family.

Its function is as follows. This protein is involved in the repair of mismatches in DNA. It is possible that it carries out the mismatch recognition step. This protein has a weak ATPase activity. The protein is DNA mismatch repair protein MutS of Salmonella paratyphi A (strain ATCC 9150 / SARB42).